The sequence spans 281 residues: Probable feruloyl esterase A (281 aa).

The N-terminal stretch at 1–21 is a signal peptide; the sequence is MKQFSAKFALALSAAAGQALA. Cystine bridges form between cysteine 50–cysteine 279, cysteine 112–cysteine 115, and cysteine 248–cysteine 255. Aspartate 98 provides a ligand contact to substrate. A glycan (N-linked (GlcNAc...) asparagine) is linked at asparagine 100. A substrate-binding site is contributed by tyrosine 101. Residue serine 154 is the Nucleophile of the active site. A glycan (N-linked (GlcNAc...) asparagine) is linked at asparagine 173. Catalysis depends on aspartate 215, which acts as the Charge relay system. A substrate-binding site is contributed by histidine 268. Histidine 268 serves as the catalytic Charge relay system.

This sequence belongs to the AB hydrolase superfamily. FaeA family.

Its subcellular location is the secreted. The enzyme catalyses feruloyl-polysaccharide + H2O = ferulate + polysaccharide.. In terms of biological role, involved in degradation of plant cell walls. Hydrolyzes the feruloyl-arabinose ester bond in arabinoxylans, and the feruloyl-galactose ester bond in pectin. In Aspergillus terreus (strain NIH 2624 / FGSC A1156), this protein is Probable feruloyl esterase A (faeA).